Reading from the N-terminus, the 492-residue chain is 3-octaprenyl-4-hydroxybenzoate carboxy-lyase (492 aa).

N177 is a Mn(2+) binding site. Prenylated FMN-binding positions include 180-182 (IYR), 194-196 (RWL), and 199-200 (RG). E243 contacts Mn(2+). D292 serves as the catalytic Proton donor.

Belongs to the UbiD family. In terms of assembly, homohexamer. The cofactor is prenylated FMN. Mn(2+) serves as cofactor.

It is found in the cell membrane. The catalysed reaction is a 4-hydroxy-3-(all-trans-polyprenyl)benzoate + H(+) = a 2-(all-trans-polyprenyl)phenol + CO2. Its pathway is cofactor biosynthesis; ubiquinone biosynthesis. In terms of biological role, catalyzes the decarboxylation of 3-octaprenyl-4-hydroxy benzoate to 2-octaprenylphenol, an intermediate step in ubiquinone biosynthesis. The protein is 3-octaprenyl-4-hydroxybenzoate carboxy-lyase of Neisseria gonorrhoeae (strain ATCC 700825 / FA 1090).